The primary structure comprises 218 residues: Envelope glycoprotein L (218 aa).

An interaction with gH region spans residues Lys-57 to Thr-185. The gL alphaherpesvirus-type domain maps to Lys-60 to Thr-218. 2 disulfide bridges follow: Cys-81/Cys-113 and Cys-183/Cys-206.

It belongs to the herpesviridae glycoprotein L (gL) family. Alphaherpesvirinae gL subfamily. As to quaternary structure, interacts with glycoprotein H (gH); this interaction is necessary for the correct processing and cell surface expression of gH. The heterodimer gH/gL seems to interact with gB trimers during fusion.

It localises to the virion membrane. Its subcellular location is the host cell membrane. It is found in the host Golgi apparatus. The protein resides in the host trans-Golgi network. Its function is as follows. The heterodimer glycoprotein H-glycoprotein L is required for the fusion of viral and plasma membranes leading to virus entry into the host cell. Acts as a functional inhibitor of gH and maintains gH in an inhibited form. Upon binding to host integrins, gL dissociates from gH leading to activation of the viral fusion glycoproteins gB and gH. This Equus caballus (Horse) protein is Envelope glycoprotein L.